A 175-amino-acid chain; its full sequence is Alkyl hydroperoxide reductase AhpD (175 aa).

The active-site Proton donor is the cysteine 131. Cysteine 131 and cysteine 134 are joined by a disulfide. Cysteine 134 serves as the catalytic Cysteine sulfenic acid (-SOH) intermediate.

Belongs to the AhpD family.

It catalyses the reaction N(6)-[(R)-dihydrolipoyl]-L-lysyl-[lipoyl-carrier protein] + a hydroperoxide = N(6)-[(R)-lipoyl]-L-lysyl-[lipoyl-carrier protein] + an alcohol + H2O. In terms of biological role, antioxidant protein with alkyl hydroperoxidase activity. Required for the reduction of the AhpC active site cysteine residues and for the regeneration of the AhpC enzyme activity. This is Alkyl hydroperoxide reductase AhpD from Brucella melitensis biotype 1 (strain ATCC 23456 / CCUG 17765 / NCTC 10094 / 16M).